The primary structure comprises 306 residues: MDTPPLSESDSESDACLASDQELQDAFSRGLLKPGLNVVLEKPKKAVNDVSGLKQCLAEFRRDLEWVERLDVTLGPVPEVSETQPTPQNQDQKKGVNPEDDFQREMSFYRQAQAAVLAVLPRLHQLQVPTKRPTDYFAEMAKSDQQMQKIRQKLQTKQAAMEKSEKAKQLRALRKYGKKVQTEVLQKRQREKAHMMNAIKKYQKGFSDKLDFLEGDQKPVERSAKAGGKGQQMSKGPNAKRRYKNQKFGFGGKKKGSKWNTKESYDDVSSFRAKVAHGKGSRRPGKKGANKRPGKRARQKLKSKAR.

M1 is modified (N-acetylmethionine). Disordered regions lie at residues 1-20 (MDTP…LASD), 75-103 (GPVP…DDFQ), and 150-169 (IRQK…KAKQ). Residue T3 is modified to Phosphothreonine. Phosphoserine is present on residues S7, S9, S11, and S13. Residues 81–90 (SETQPTPQNQ) show a composition bias toward polar residues. The span at 91–103 (DQKKGVNPEDDFQ) shows a compositional bias: basic and acidic residues. A Glycyl lysine isopeptide (Lys-Gly) (interchain with G-Cter in SUMO2) cross-link involves residue K93. Residues 135-171 (DYFAEMAKSDQQMQKIRQKLQTKQAAMEKSEKAKQLR) adopt a coiled-coil conformation. Glycyl lysine isopeptide (Lys-Gly) (interchain with G-Cter in SUMO2) cross-links involve residues K179 and K218. The span at 213-224 (LEGDQKPVERSA) shows a compositional bias: basic and acidic residues. The tract at residues 213–306 (LEGDQKPVER…ARQKLKSKAR (94 aa)) is disordered. Phosphoserine is present on residues S264 and S270. The span at 274–306 (KVAHGKGSRRPGKKGANKRPGKRARQKLKSKAR) shows a compositional bias: basic residues.

This sequence belongs to the EBP2 family. As to quaternary structure, interacts with WDR46.

The protein resides in the nucleus. Its subcellular location is the nucleolus. Functionally, required for the processing of the 27S pre-rRNA. This chain is Probable rRNA-processing protein EBP2 (Ebna1bp2), found in Mus musculus (Mouse).